The chain runs to 465 residues: Gamma-aminobutyric acid receptor subunit gamma-1 (465 aa).

Residues 1 to 35 form the signal peptide; that stretch reads MGPLKAFLFSPFLLRSQSRGVRLVFLLLTLHLGNC. Over 36–273 the chain is Extracellular; sequence VDKADDEDDE…FDLSRRMGYF (238 aa). Residues N50 and N127 are each glycosylated (N-linked (GlcNAc...) asparagine). Cysteines 188 and 202 form a disulfide. N245 carries an N-linked (GlcNAc...) asparagine glycan. A helical membrane pass occupies residues 274–294; that stretch reads TIQTYIPCILTVVLSWVSFWI. Residues 295-300 lie on the Cytoplasmic side of the membrane; it reads NKDAVP. Residues 301–320 form a helical membrane-spanning segment; that stretch reads ARTSLGITTVLTMTTLSTIA. The Extracellular segment spans residues 321–328; it reads RKSLPKVS. The helical transmembrane segment at 329-349 threads the bilayer; that stretch reads YVTAMDLFVSVCFIFVFAALM. Over 350–444 the chain is Cytoplasmic; the sequence is EYGTLHYFTS…RIAKIDSYSR (95 aa). Residues 445 to 465 traverse the membrane as a helical segment; that stretch reads IFFPTAFALFNLVYWVGYLYL.

This sequence belongs to the ligand-gated ion channel (TC 1.A.9) family. Gamma-aminobutyric acid receptor (TC 1.A.9.5) subfamily. GABRG1 sub-subfamily. Heteropentamer, formed by a combination of alpha (GABRA1-6), beta (GABRB1-3), gamma (GABRG1-3), delta (GABRD), epsilon (GABRE), rho (GABRR1-3), pi (GABRP) and theta (GABRQ) chains, each subunit exhibiting distinct physiological and pharmacological properties. In terms of processing, may be palmitoylated.

The protein localises to the postsynaptic cell membrane. The protein resides in the cell membrane. It catalyses the reaction chloride(in) = chloride(out). Its function is as follows. Gamma subunit of the heteropentameric ligand-gated chloride channel gated by gamma-aminobutyric acid (GABA), a major inhibitory neurotransmitter in the brain. GABA-gated chloride channels, also named GABA(A) receptors (GABAAR), consist of five subunits arranged around a central pore and contain GABA active binding site(s) located at the alpha and beta subunit interface(s). When activated by GABA, GABAARs selectively allow the flow of chloride anions across the cell membrane down their electrochemical gradient. Chloride influx into the postsynaptic neuron following GABAAR opening decreases the neuron ability to generate a new action potential, thereby reducing nerve transmission. The sequence is that of Gamma-aminobutyric acid receptor subunit gamma-1 from Homo sapiens (Human).